The primary structure comprises 766 residues: Darlin (766 aa).

4 ARM repeats span residues 82 to 119 (QLFEFLLPNGVETLNTDTTVEQSELFSMVCRLLGNLTY), 167 to 208 (DFIQ…NLVD), 423 to 464 (EPNC…NLTL), and 465 to 537 (PTIN…ASMD). The disordered stretch occupies residues 561–585 (EEKEKTIEKTDEKTDEKTNEKKQSK). The ARM 5 repeat unit spans residues 610–649 (HQEKMKQLIEESVEPFFSLLQSPFPILQVEGAKGLVLLIK).

The protein belongs to the RAP1GDS1 family. As to quaternary structure, binds to small GTPases racE, racC but not rab21. Binds preferentially to GDP-bound racE.

Functionally, part of a signaling pathway that initiates the aggregation and leads to the formation of aggregation centers or streams. Not essential for cytokinesis, pinocytosis or phagocytosis. Not essential for development, except in starvation-induced aggregation. The sequence is that of Darlin (darA) from Dictyostelium discoideum (Social amoeba).